The primary structure comprises 587 residues: Protein NRT1/ PTR FAMILY 2.9 (587 aa).

The next 12 membrane-spanning stretches (helical) occupy residues 35 to 55 (FEKLGIVGSSSNLVIYLTTVF), 65 to 85 (VVNIYGGTSNFGTIVAAFLCD), 94 to 114 (LSFAMIACFLGSVAMDLTAVI), 135 to 155 (IGQIMFLAGAMVLLVIGAGGI), 181 to 201 (FFNWYFFTFTFAQMVSLTLIV), 209 to 229 (WSIGLAIPAILMLLGCIIFFA), 325 to 345 (CVIRVLPVWLSAALFYLAYIQ), 368 to 388 (IPAGSYTVFLMLGMTIFIPIY), 412 to 432 (VGAGLFLCITSMMVSAIVEQY), 457 to 477 (GMWLIPQLVLMGIADALAGVG), 493 to 513 (FAGSLYYCGIGLASYLSTFLL), and 540 to 560 (YFYFLVAGMMTLNLAYFLLVS).

The protein belongs to the major facilitator superfamily. Proton-dependent oligopeptide transporter (POT/PTR) (TC 2.A.17) family. As to expression, expressed in roots, stems and major veins of the leaves. Detected in the companion cells of the root phloem.

It is found in the cell membrane. Low-affinity nitrate transporter facilitating nitrate loading into root phloem. Not involved in dipeptides transport, but has a weak glucosinolate transport activity. The polypeptide is Protein NRT1/ PTR FAMILY 2.9 (NPF2.9) (Arabidopsis thaliana (Mouse-ear cress)).